Reading from the N-terminus, the 370-residue chain is 3-dehydroquinate synthase (370 aa).

Residues 112 to 116 (GVVGD), 136 to 137 (TS), Lys149, Lys158, and 176 to 179 (TLRT) each bind NAD(+). Zn(2+)-binding residues include Glu191, His254, and His276.

The protein belongs to the sugar phosphate cyclases superfamily. Dehydroquinate synthase family. Requires NAD(+) as cofactor. It depends on Co(2+) as a cofactor. Zn(2+) is required as a cofactor.

The protein localises to the cytoplasm. It carries out the reaction 7-phospho-2-dehydro-3-deoxy-D-arabino-heptonate = 3-dehydroquinate + phosphate. The protein operates within metabolic intermediate biosynthesis; chorismate biosynthesis; chorismate from D-erythrose 4-phosphate and phosphoenolpyruvate: step 2/7. In terms of biological role, catalyzes the conversion of 3-deoxy-D-arabino-heptulosonate 7-phosphate (DAHP) to dehydroquinate (DHQ). The sequence is that of 3-dehydroquinate synthase from Xanthomonas axonopodis pv. citri (strain 306).